A 38-amino-acid polypeptide reads, in one-letter code: Large ribosomal subunit protein bL36 (38 aa).

This sequence belongs to the bacterial ribosomal protein bL36 family.

The protein is Large ribosomal subunit protein bL36 of Baumannia cicadellinicola subsp. Homalodisca coagulata.